The following is a 184-amino-acid chain: Protein Syd (184 aa).

The protein belongs to the Syd family.

Its subcellular location is the cell inner membrane. Its function is as follows. Interacts with the SecY protein in vivo. May bind preferentially to an uncomplexed state of SecY, thus functioning either as a chelating agent for excess SecY in the cell or as a regulatory factor that negatively controls the translocase function. This is Protein Syd from Psychromonas ingrahamii (strain DSM 17664 / CCUG 51855 / 37).